Reading from the N-terminus, the 285-residue chain is Putative cuticle collagen 75 (285 aa).

Triple-helical region stretches follow at residues 87–116 (GRIG…PGEL) and 133–261 (GPKG…PGLD). The span at 207 to 231 (PGAPGIPGEEGLSGPTGQPGSPGSI) shows a compositional bias: low complexity. A disordered region spans residues 207 to 257 (PGAPGIPGEEGLSGPTGQPGSPGSIGAMGYEGAYGDRGEPGPPGPIGRRGG).

The protein belongs to the cuticular collagen family. Collagen polypeptide chains are complexed within the cuticle by disulfide bonds and other types of covalent cross-links.

Nematode cuticles are composed largely of collagen-like proteins. The cuticle functions both as an exoskeleton and as a barrier to protect the worm from its environment. This is Putative cuticle collagen 75 (col-75) from Caenorhabditis elegans.